Reading from the N-terminus, the 339-residue chain is Glycerol-3-phosphate dehydrogenase [NAD(P)+] (339 aa).

Residues Ser14, Tyr15, His35, and Lys109 each contribute to the NADPH site. Residues Lys109, Gly138, and Thr140 each coordinate sn-glycerol 3-phosphate. Residue Ala142 coordinates NADPH. Sn-glycerol 3-phosphate is bound by residues Lys194, Asp247, Ser257, Arg258, and Asn259. Catalysis depends on Lys194, which acts as the Proton acceptor. Position 258 (Arg258) interacts with NADPH. NADPH contacts are provided by Val282 and Glu284.

It belongs to the NAD-dependent glycerol-3-phosphate dehydrogenase family.

It localises to the cytoplasm. The catalysed reaction is sn-glycerol 3-phosphate + NAD(+) = dihydroxyacetone phosphate + NADH + H(+). The enzyme catalyses sn-glycerol 3-phosphate + NADP(+) = dihydroxyacetone phosphate + NADPH + H(+). It functions in the pathway membrane lipid metabolism; glycerophospholipid metabolism. Its function is as follows. Catalyzes the reduction of the glycolytic intermediate dihydroxyacetone phosphate (DHAP) to sn-glycerol 3-phosphate (G3P), the key precursor for phospholipid synthesis. The chain is Glycerol-3-phosphate dehydrogenase [NAD(P)+] from Shewanella pealeana (strain ATCC 700345 / ANG-SQ1).